A 501-amino-acid polypeptide reads, in one-letter code: ATP synthase subunit alpha (501 aa).

Glycine 169–threonine 176 contributes to the ATP binding site.

It belongs to the ATPase alpha/beta chains family. As to quaternary structure, F-type ATPases have 2 components, CF(1) - the catalytic core - and CF(0) - the membrane proton channel. CF(1) has five subunits: alpha(3), beta(3), gamma(1), delta(1), epsilon(1). CF(0) has three main subunits: a(1), b(2) and c(9-12). The alpha and beta chains form an alternating ring which encloses part of the gamma chain. CF(1) is attached to CF(0) by a central stalk formed by the gamma and epsilon chains, while a peripheral stalk is formed by the delta and b chains.

The protein localises to the cell membrane. It catalyses the reaction ATP + H2O + 4 H(+)(in) = ADP + phosphate + 5 H(+)(out). Functionally, produces ATP from ADP in the presence of a proton gradient across the membrane. The alpha chain is a regulatory subunit. The polypeptide is ATP synthase subunit alpha (Streptococcus equi subsp. equi (strain 4047)).